The chain runs to 133 residues: Small ribosomal subunit protein uS8 (133 aa).

Belongs to the universal ribosomal protein uS8 family. As to quaternary structure, part of the 30S ribosomal subunit. Contacts proteins S5 and S12.

One of the primary rRNA binding proteins, it binds directly to 16S rRNA central domain where it helps coordinate assembly of the platform of the 30S subunit. This is Small ribosomal subunit protein uS8 from Prochlorococcus marinus (strain MIT 9515).